A 545-amino-acid chain; its full sequence is POTE ankyrin domain family member H (545 aa).

7 ANK repeats span residues 180-208 (LHRAAWWGKVPRKDLIVMLKDTDMNKKDK), 209-238 (QKRTALHLASANGNSEVVKLLLDRRCQLNI), 242-271 (KKRTALTKAVQCQEDECALMLLEHGTDPNI), 275-304 (YGNTALHYAIYNEDKLMAKALLLYGADIES), 308-337 (HGLTPLLLGVHEQKQQVVKFLIKKKANLNA), 341-370 (YGRTALILAVCCGSASIVSLLLEQNIDVSS), and 374-404 (SGQTAREYAVSSRHNVICQLLSDYKEKQILK). A disordered region spans residues 406-524 (SSENSNPEQD…KQLSEEQNTG (119 aa)). Composition is skewed to basic and acidic residues over residues 414-429 (QDLKLTSEEESQRLKG) and 443-458 (EINKGGDRKVEEEMKK). Residues 513–524 (TQKQLSEEQNTG) show a composition bias toward polar residues.

This sequence belongs to the POTE family.

In Homo sapiens (Human), this protein is POTE ankyrin domain family member H (POTEH).